A 296-amino-acid chain; its full sequence is Phosphatidylcholine:diacylglycerol cholinephosphotransferase 2 (296 aa).

The next 5 membrane-spanning stretches (helical) occupy residues 83–103, 136–156, 165–182, 198–218, and 250–270; these read HWIP…EYTF, VLAA…GCTW, TIAA…GYST, PVGN…SMIA, and GHYT…DSLA. Catalysis depends on residues histidine 211, histidine 251, and aspartate 255.

This sequence belongs to the phosphatidylcholine:diacylglycerol cholinephosphotransferase family.

It is found in the membrane. In terms of biological role, functions as a phosphatidylcholine:diacylglycerol cholinephosphotransferase that catalyzes the transfer of the phosphocholine headgroup from phosphatidylcholine (PC) to diacylglycerol, a major reaction for the transfer of 18:1 into phosphatidylcholine for desaturation and also for the reverse transfer of 18:2 and 18:3 into the triacylglycerols synthesis pathway. This Arabidopsis thaliana (Mouse-ear cress) protein is Phosphatidylcholine:diacylglycerol cholinephosphotransferase 2.